The chain runs to 425 residues: Secernin-2 (425 aa).

Residue Cys-12 is part of the active site. Thr-52 carries the post-translational modification Phosphothreonine.

The protein belongs to the peptidase C69 family. Secernin subfamily.

The chain is Secernin-2 (SCRN2) from Homo sapiens (Human).